A 345-amino-acid chain; its full sequence is Protein RecA (345 aa).

67-74 lines the ATP pocket; the sequence is GPESSGKT.

Belongs to the RecA family.

Its subcellular location is the cytoplasm. Its function is as follows. Can catalyze the hydrolysis of ATP in the presence of single-stranded DNA, the ATP-dependent uptake of single-stranded DNA by duplex DNA, and the ATP-dependent hybridization of homologous single-stranded DNAs. It interacts with LexA causing its activation and leading to its autocatalytic cleavage. In Acidothermus cellulolyticus (strain ATCC 43068 / DSM 8971 / 11B), this protein is Protein RecA.